The sequence spans 335 residues: Dihydroorotate dehydrogenase (quinone) (335 aa).

Residues 58–62 (AGADK) and T82 each bind FMN. K62 lines the substrate pocket. 107–111 (NRNGF) lines the substrate pocket. FMN-binding residues include N135 and N168. N168 serves as a coordination point for substrate. The active-site Nucleophile is S171. Substrate is bound at residue N173. FMN contacts are provided by K213 and G241. Position 242-243 (242-243 (NT)) interacts with substrate. FMN contacts are provided by residues G264, G293, and 314-315 (YS).

It belongs to the dihydroorotate dehydrogenase family. Type 2 subfamily. As to quaternary structure, monomer. FMN is required as a cofactor.

Its subcellular location is the cell membrane. It carries out the reaction (S)-dihydroorotate + a quinone = orotate + a quinol. The protein operates within pyrimidine metabolism; UMP biosynthesis via de novo pathway; orotate from (S)-dihydroorotate (quinone route): step 1/1. In terms of biological role, catalyzes the conversion of dihydroorotate to orotate with quinone as electron acceptor. The sequence is that of Dihydroorotate dehydrogenase (quinone) from Actinobacillus pleuropneumoniae serotype 7 (strain AP76).